Here is a 335-residue protein sequence, read N- to C-terminus: Legumin type B (335 aa).

Disordered regions lie at residues 47–87 and 102–155; these read PETQ…GNSV and TEED…GRNG. A compositionally biased stretch (basic and acidic residues) spans 105–118; the sequence is DTAKRLRSPRDKRN. The span at 135–144 shows a compositional bias: acidic residues; the sequence is QQEEEEQEEE. In terms of domain architecture, Cupin type-1 spans 167-314; it reads ENIAQPARAD…AFGLRQRQVT (148 aa).

Belongs to the 11S seed storage protein (globulins) family. In terms of assembly, hexamer; each subunit is composed of an acidic and a basic chain derived from a single precursor and linked by a disulfide bond.

This protein found in the seeds of many leguminous and non-leguminous plants is the source of sulfur-containing amino acids in seed meals. The polypeptide is Legumin type B (LEB7) (Vicia faba (Broad bean)).